Consider the following 214-residue polypeptide: Riboflavin kinase (214 aa).

The tract at residues 1–91 is H-T-H motif-like; the sequence is MRSIMEVETL…YCSIFEDGGA (91 aa). Positions 92–214 are riboflavin kinase; it reads PVMRGKVVTG…DGDEVEVTLE (123 aa). Residue 101-106 coordinates CDP; it reads GLGEGQ. The Mg(2+) site is built by Thr-130 and Asn-132. Thr-182 and Glu-190 together coordinate FMN. 195 to 198 is a CDP binding site; sequence IKLR.

It belongs to the archaeal riboflavin kinase family. The cofactor is Mg(2+).

The catalysed reaction is riboflavin + CTP = CDP + FMN + H(+). It participates in cofactor biosynthesis; FMN biosynthesis; FMN from riboflavin (CTP route): step 1/1. Its function is as follows. Catalyzes the CTP-dependent phosphorylation of riboflavin (vitamin B2) to form flavin mononucleotide (FMN). The sequence is that of Riboflavin kinase (ribK) from Methanocella arvoryzae (strain DSM 22066 / NBRC 105507 / MRE50).